We begin with the raw amino-acid sequence, 571 residues long: MSFKMTQSQYTSLYGPTVGDSVRLGDTNLFARVEKDYATYGDEAAFGGGKSIRDGMAQNPNVTRDDKQVADLVITNALILDYDKIVKADIGVKNGYIMKIGKAGNPDIMDNVDIIIGATTDIISAEGKIVTAGGIDTHVHFVNPEQSQVALESGITTHIGGGTGASEGAKATTVTPGPWHLHRMLLAAESLPLNIGFTGKGQAVNHTALVEQIHAGAIGLKVHEDWGATPSALDHALQVADDYDVQIALHADTLNEAGFMEETMAAVKDRVLHMYHTEGAGGGHAPDLIKSAAYSNILPSSTNPTLPYTVNTIDEHLDMVMITHHLNASIPEDIAFADSRIRKETIAAEDVLQDIGVFSMVSSDSQAMGRVGEVITRTWQVAHRMKEQRGSLDGDSEYNDNNRIKRYIAKYTINPAITHGISDYVGSIDEGKLADIIMWEPAFFAVKPDVIVKGGLINPAINGDANGSIPTSEPLKYRKMYGQLGGNMQGTSMTFVSTTAYENDIGKLLGLKRKLRPVHNIRKLTKADMKNNSATPKIDVDPQTYEVFVDGEKITSEPATELPLTQRYFLF.

Residues 133-571 (GGIDTHVHFV…LPLTQRYFLF (439 aa)) form the Urease domain. H138, H140, and K221 together coordinate Ni(2+). K221 is subject to N6-carboxylysine. H223 contacts substrate. H250 and H276 together coordinate Ni(2+). The Proton donor role is filled by H324. Residue D364 coordinates Ni(2+).

The protein belongs to the metallo-dependent hydrolases superfamily. Urease alpha subunit family. In terms of assembly, heterotrimer of UreA (gamma), UreB (beta) and UreC (alpha) subunits. Three heterotrimers associate to form the active enzyme. It depends on Ni cation as a cofactor. In terms of processing, carboxylation allows a single lysine to coordinate two nickel ions.

It is found in the cytoplasm. The catalysed reaction is urea + 2 H2O + H(+) = hydrogencarbonate + 2 NH4(+). It participates in nitrogen metabolism; urea degradation; CO(2) and NH(3) from urea (urease route): step 1/1. This chain is Urease subunit alpha, found in Staphylococcus xylosus.